Consider the following 265-residue polypeptide: H-2 class II histocompatibility antigen, A-Q beta chain (265 aa).

The signal sequence occupies residues 1-27; sequence MALQIPSLLLSAAVVVLMVLSSPRTEG. Residues 28-122 form a beta-1 region; sequence GNSERHFVAQ…VETHTSLRRL (95 aa). At 28-227 the chain is on the extracellular side; sequence GNSERHFVAQ…AQSESARSKM (200 aa). Cystine bridges form between C42–C106 and C145–C201. N46 carries N-linked (GlcNAc...) asparagine glycosylation. The segment at 123 to 217 is beta-2; the sequence is EQPNVAISLS…LKSPITVEWR (95 aa). Residues 125 to 213 enclose the Ig-like C1-type domain; the sequence is PNVAISLSRT…EHPSLKSPIT (89 aa). A connecting peptide region spans residues 218–227; that stretch reads AQSESARSKM. Residues 228-247 form a helical membrane-spanning segment; the sequence is LSGIGGCVLGVIFLGLGLFI. At 248-265 the chain is on the cytoplasmic side; sequence RHRSQKGPRGPPPAGLLQ.

It belongs to the MHC class II family. In terms of processing, ubiquitinated in immature dendritic cells leading to down-regulation of MHC class II.

Its subcellular location is the membrane. This chain is H-2 class II histocompatibility antigen, A-Q beta chain (H2-Ab1), found in Mus musculus (Mouse).